Reading from the N-terminus, the 229-residue chain is 7-cyano-7-deazaguanine synthase (229 aa).

Residue 9 to 19 (LSGGLDSTTVL) participates in ATP binding. Positions 192, 202, 205, and 208 each coordinate Zn(2+).

Belongs to the QueC family. The cofactor is Zn(2+).

The catalysed reaction is 7-carboxy-7-deazaguanine + NH4(+) + ATP = 7-cyano-7-deazaguanine + ADP + phosphate + H2O + H(+). It functions in the pathway purine metabolism; 7-cyano-7-deazaguanine biosynthesis. Its function is as follows. Catalyzes the ATP-dependent conversion of 7-carboxy-7-deazaguanine (CDG) to 7-cyano-7-deazaguanine (preQ(0)). This chain is 7-cyano-7-deazaguanine synthase, found in Kineococcus radiotolerans (strain ATCC BAA-149 / DSM 14245 / SRS30216).